Reading from the N-terminus, the 301-residue chain is Protoheme IX farnesyltransferase (301 aa).

Helical transmembrane passes span 29-49 (VVAL…PGAV), 51-71 (LQPL…AAAF), 101-121 (AFSF…WWVN), 123-143 (LTAW…TAYL), 150-170 (NIVI…TAVT), 177-197 (ALLL…ALAI), 223-243 (CILL…LVGM), 244-264 (SGPV…YKAW), and 281-301 (FSIY…YLWG).

It belongs to the UbiA prenyltransferase family. Protoheme IX farnesyltransferase subfamily.

It localises to the cell inner membrane. The catalysed reaction is heme b + (2E,6E)-farnesyl diphosphate + H2O = Fe(II)-heme o + diphosphate. It participates in porphyrin-containing compound metabolism; heme O biosynthesis; heme O from protoheme: step 1/1. Its function is as follows. Converts heme B (protoheme IX) to heme O by substitution of the vinyl group on carbon 2 of heme B porphyrin ring with a hydroxyethyl farnesyl side group. The protein is Protoheme IX farnesyltransferase of Shewanella denitrificans (strain OS217 / ATCC BAA-1090 / DSM 15013).